A 246-amino-acid chain; its full sequence is tRNA (guanine-N(1)-)-methyltransferase (246 aa).

S-adenosyl-L-methionine-binding positions include G114 and 134–139; that span reads IGDYIL.

The protein belongs to the RNA methyltransferase TrmD family. As to quaternary structure, homodimer.

Its subcellular location is the cytoplasm. It catalyses the reaction guanosine(37) in tRNA + S-adenosyl-L-methionine = N(1)-methylguanosine(37) in tRNA + S-adenosyl-L-homocysteine + H(+). Its function is as follows. Specifically methylates guanosine-37 in various tRNAs. This chain is tRNA (guanine-N(1)-)-methyltransferase, found in Coxiella burnetii (strain RSA 493 / Nine Mile phase I).